The following is a 125-amino-acid chain: Glycine cleavage system H protein (125 aa).

Residues 22-104 (SYIIGITDFA…YDTGWILKLT (83 aa)) form the Lipoyl-binding domain. K63 bears the N6-lipoyllysine mark.

It belongs to the GcvH family. In terms of assembly, the glycine cleavage system is composed of four proteins: P, T, L and H. (R)-lipoate serves as cofactor.

The glycine cleavage system catalyzes the degradation of glycine. The H protein shuttles the methylamine group of glycine from the P protein to the T protein. In terms of biological role, is also involved in protein lipoylation via its role as an octanoyl/lipoyl carrier protein intermediate. In Listeria innocua serovar 6a (strain ATCC BAA-680 / CLIP 11262), this protein is Glycine cleavage system H protein.